A 306-amino-acid polypeptide reads, in one-letter code: MVAAGKSDLSLPKTFACSAFAACVGEVCTIPLDTAKVRLQLQKSALAGDVTLPKYRGLLGTVGTIAREEGLRSLWKGVVPGLHRQCLFGGLRIGMYEPVKNLYVGKDFVGDVPLSKKILAGLTTGALGIMVANPTDLVKVRLQAEGKLAAGAPRRYSGALNAYSTIVRQEGVRALWTGLGPNVARNAIINAAELASYDQVKETILKIPGFTDNVVTHILSGLGAGFFAVCIGSPVDVVKSRMMGDSGAYKGTIDCFVKTLKSDGPMAFYKGFIPNFGRLGSWNVIMFLTLEQAKKYVRELDASKRN.

Solcar repeat units lie at residues 9-102 (LSLP…VKNL), 112-203 (VPLS…VKET), and 212-296 (DNVV…AKKY). The next 6 membrane-spanning stretches (helical) occupy residues 15-35 (FACSAFAACVGEVCTIPLDTA), 71-91 (LRSLWKGVVPGLHRQCLFGGL), 118-138 (ILAGLTTGALGIMVANPTDLV), 177-197 (TGLGPNVARNAIINAAELASY), 218-238 (ILSGLGAGFFAVCIGSPVDVV), and 269-289 (YKGFIPNFGRLGSWNVIMFLT).

It belongs to the mitochondrial carrier (TC 2.A.29) family. As to expression, widely expressed.

It localises to the mitochondrion inner membrane. Functionally, PUMPS are mitochondrial transporter proteins that create proton leaks across the inner mitochondrial membrane, thus uncoupling oxidative phosphorylation. This leads to a decrease in the efficiency of oxidative phosphorylation and an increase in heat production. Is involved in protecting plant cells against oxidative stress damage and maintaining the redox balance of the mitochondrial electron transport chain to facilitate photosynthetic metabolism. May play a regulatory role during photorespiration. This Arabidopsis thaliana (Mouse-ear cress) protein is Mitochondrial uncoupling protein 1 (PUMP1).